A 238-amino-acid chain; its full sequence is ATP synthase subunit a (238 aa).

The next 5 membrane-spanning stretches (helical) occupy residues 15–35 (IFNLTMLAMTLLIVGVIFVFI), 76–96 (YSLFFLCLFLFMVIANNLGLM), 111–131 (PTANLQYDLTLSFLVILLTHI), 167–187 (LALRIFGNIFAGEVMTSLLLL), and 208–230 (AFSVFISCIQAYVFTLLTSVYLG).

This sequence belongs to the ATPase A chain family. F-type ATPases have 2 components, CF(1) - the catalytic core - and CF(0) - the membrane proton channel. CF(1) has five subunits: alpha(3), beta(3), gamma(1), delta(1), epsilon(1). CF(0) has three main subunits: a(1), b(2) and c(9-12). The alpha and beta chains form an alternating ring which encloses part of the gamma chain. CF(1) is attached to CF(0) by a central stalk formed by the gamma and epsilon chains, while a peripheral stalk is formed by the delta and b chains.

The protein localises to the cell membrane. In terms of biological role, key component of the proton channel; it plays a direct role in the translocation of protons across the membrane. The protein is ATP synthase subunit a of Streptococcus pneumoniae (strain ATCC BAA-255 / R6).